The chain runs to 456 residues: MYQKNYHIYFVGIGGIGMSAIAELLLSLGYRVSGSDLKLSAITQRLASCGATIFNGHRADQVKDVDVLVTSTAISKNNPEVIEAAERSIRTIPRAEMLAELMRIKYAIAVSGAHGKTSTTAMIATILNQAGLDPTVVVGGLLKSIGTNAHHGKGDYIVAEADESDGSFLKYAPAIAAVTNIDLEHLDFYKDIEDIKDNFVKFINSVPFYGLAVLCLDNEHIQAILPRITARYTTFGLSAQADLAARGIRFEGRRGYFTVVHGKEVLGDITLNLSGKHNISNALAAIAVALELKVDFSVIKEALEQIEGVKRRLEIKGERNSITVVDDYGHHPTEVKTTLAAVREGWPDKRVVVVFQPHRYSRTKALFDEFTRAFYQSDLLFVLPIYAASEQPIDGIDSLKLCNGIQEHGHKNVICVKDFESCLSILSDTLEPGDLVLTLGAGDVYNLGETLLEILA.

ATP is bound at residue 112 to 118; that stretch reads GAHGKTS.

Belongs to the MurCDEF family.

Its subcellular location is the cytoplasm. The enzyme catalyses UDP-N-acetyl-alpha-D-muramate + L-alanine + ATP = UDP-N-acetyl-alpha-D-muramoyl-L-alanine + ADP + phosphate + H(+). Its pathway is cell wall biogenesis; peptidoglycan biosynthesis. Cell wall formation. The chain is UDP-N-acetylmuramate--L-alanine ligase from Desulforapulum autotrophicum (strain ATCC 43914 / DSM 3382 / VKM B-1955 / HRM2) (Desulfobacterium autotrophicum).